We begin with the raw amino-acid sequence, 219 residues long: ATP-dependent dethiobiotin synthetase BioD (219 aa).

12 to 17 (GVGKTI) serves as a coordination point for ATP. Threonine 16 serves as a coordination point for Mg(2+). The active site involves lysine 32. Residues aspartate 43 and 96–99 (ETSG) contribute to the ATP site. Mg(2+) contacts are provided by aspartate 43 and glutamate 96.

This sequence belongs to the dethiobiotin synthetase family. In terms of assembly, homodimer. Mg(2+) serves as cofactor.

It is found in the cytoplasm. It carries out the reaction (7R,8S)-7,8-diammoniononanoate + CO2 + ATP = (4R,5S)-dethiobiotin + ADP + phosphate + 3 H(+). It functions in the pathway cofactor biosynthesis; biotin biosynthesis; biotin from 7,8-diaminononanoate: step 1/2. Functionally, catalyzes a mechanistically unusual reaction, the ATP-dependent insertion of CO2 between the N7 and N8 nitrogen atoms of 7,8-diaminopelargonic acid (DAPA, also called 7,8-diammoniononanoate) to form a ureido ring. The polypeptide is ATP-dependent dethiobiotin synthetase BioD (Chlamydia pneumoniae (Chlamydophila pneumoniae)).